The following is a 220-amino-acid chain: MKGIVLLSGGLDSAVCLAFGVRSLEVALCLTADYGQLAAGREIAAAAALSAHYGIRHQVVELPFLREIDCSALTGRLGLPEPEEMELDDPVRSAETARQVWVPNRNGLLVNVAACYAEALGCERIIAGFNREEAQHFPDNSPQFLDAVNHSLAYSTLSGIRVISYTQQLDKAEIVALGQRLGLPWSLVWSCYRGGDEACGVCESCRRLERAKRSAGGVRV.

Leucine 7–leucine 17 serves as a coordination point for ATP. Residues cysteine 191, cysteine 199, cysteine 202, and cysteine 205 each coordinate Zn(2+).

It belongs to the QueC family. In terms of assembly, homodimer. The cofactor is Zn(2+).

The catalysed reaction is 7-carboxy-7-deazaguanine + NH4(+) + ATP = 7-cyano-7-deazaguanine + ADP + phosphate + H2O + H(+). Its pathway is purine metabolism; 7-cyano-7-deazaguanine biosynthesis. Functionally, catalyzes the ATP-dependent conversion of 7-carboxy-7-deazaguanine (CDG) to 7-cyano-7-deazaguanine (preQ(0)). The chain is 7-cyano-7-deazaguanine synthase from Desulforudis audaxviator (strain MP104C).